The chain runs to 255 residues: Thiazole synthase (255 aa).

The Schiff-base intermediate with DXP role is filled by Lys-96. 1-deoxy-D-xylulose 5-phosphate-binding positions include Gly-157, 183–184, and 205–206; these read AG and NT.

This sequence belongs to the ThiG family. Homotetramer. Forms heterodimers with either ThiH or ThiS.

The protein resides in the cytoplasm. The catalysed reaction is [ThiS sulfur-carrier protein]-C-terminal-Gly-aminoethanethioate + 2-iminoacetate + 1-deoxy-D-xylulose 5-phosphate = [ThiS sulfur-carrier protein]-C-terminal Gly-Gly + 2-[(2R,5Z)-2-carboxy-4-methylthiazol-5(2H)-ylidene]ethyl phosphate + 2 H2O + H(+). Its pathway is cofactor biosynthesis; thiamine diphosphate biosynthesis. Its function is as follows. Catalyzes the rearrangement of 1-deoxy-D-xylulose 5-phosphate (DXP) to produce the thiazole phosphate moiety of thiamine. Sulfur is provided by the thiocarboxylate moiety of the carrier protein ThiS. In vitro, sulfur can be provided by H(2)S. This is Thiazole synthase from Staphylococcus saprophyticus subsp. saprophyticus (strain ATCC 15305 / DSM 20229 / NCIMB 8711 / NCTC 7292 / S-41).